A 695-amino-acid polypeptide reads, in one-letter code: U1 snRNP-associated protein usp107 (695 aa).

The segment covering 85-96 (RDNESQQKDRKN) has biased composition (basic and acidic residues). Positions 85–134 (RDNESQQKDRKNLPRNQKSNEIQEKQTFQTPSSEKSTTERESRPFVPPNS) are disordered. Over residues 98–113 (PRNQKSNEIQEKQTFQ) the composition is skewed to polar residues. Positions 139–221 (RMLFIGNIPK…PSTRLSLITD (83 aa)) constitute an RRM domain. Residues 265-369 (DVRSRIERAA…NLLSKHRISR (105 aa)) are a coiled coil. 2 stretches are compositionally biased toward basic and acidic residues: residues 487 to 506 (EEDA…RTRG) and 548 to 561 (SERR…RLLL). Disordered stretches follow at residues 487–509 (EEDA…GEGA) and 540–590 (QTKK…AEKT). The PWI domain occupies 605-695 (ESLWALPIDW…HVLLILRSEA (91 aa)).

Component of the U1 snRNP particle, a subcomplex of the spliceosome. Interacts with prp5 and usp102.

Its subcellular location is the cytoplasm. It localises to the nucleus. Its function is as follows. Component of the U1 snRNP particle, which recognizes and binds the 5'-splice site of pre-mRNA. Together with other non-snRNP factors, U1 snRNP forms the spliceosomal commitment complex, that targets pre-mRNA to the splicing pathway. The polypeptide is U1 snRNP-associated protein usp107 (usp107) (Schizosaccharomyces pombe (strain 972 / ATCC 24843) (Fission yeast)).